A 240-amino-acid polypeptide reads, in one-letter code: Dephospho-CoA kinase domain-containing protein (240 aa).

The DPCK domain maps to 3–207 (LVGLTGGIAS…RSMEYLPLRL (205 aa)). ATP is bound at residue 8–15 (GGIASGKS).

It belongs to the CoaE family.

The protein is Dephospho-CoA kinase domain-containing protein (Dcakd) of Rattus norvegicus (Rat).